The following is a 92-amino-acid chain: Long neurotoxin 3FTx-Oxy2 (92 aa).

The N-terminal stretch at Met-1 to Thr-21 is a signal peptide. Intrachain disulfides connect Cys-24/Cys-42, Cys-35/Cys-63, Cys-67/Cys-79, and Cys-80/Cys-85.

The protein belongs to the three-finger toxin family. Long-chain subfamily. Type II alpha-neurotoxin sub-subfamily. Expressed by the venom gland.

Its subcellular location is the secreted. Binds with high affinity to muscular (alpha-1/CHRNA1) and neuronal (alpha-7/CHRNA7) nicotinic acetylcholine receptor (nAChR) and inhibits acetylcholine from binding to the receptor, thereby impairing neuromuscular and neuronal transmission. This chain is Long neurotoxin 3FTx-Oxy2, found in Oxyuranus microlepidotus (Inland taipan).